A 106-amino-acid chain; its full sequence is A-type ATP synthase subunit F (106 aa).

This sequence belongs to the V-ATPase F subunit family. Has multiple subunits with at least A(3), B(3), C, D, E, F, H, I and proteolipid K(x).

The protein resides in the cell membrane. Its function is as follows. Component of the A-type ATP synthase that produces ATP from ADP in the presence of a proton gradient across the membrane. The sequence is that of A-type ATP synthase subunit F from Haloferax volcanii (strain ATCC 29605 / DSM 3757 / JCM 8879 / NBRC 14742 / NCIMB 2012 / VKM B-1768 / DS2) (Halobacterium volcanii).